Here is a 236-residue protein sequence, read N- to C-terminus: Chorionic somatomammotropin hormone (236 aa).

An N-terminal signal peptide occupies residues 1 to 36 (MAPASSHREHQWTCNLVRGSRLLLLLVVSNLILCQG). Cystine bridges form between Cys-44–Cys-51, Cys-97–Cys-212, and Cys-229–Cys-234.

The protein belongs to the somatotropin/prolactin family.

It is found in the secreted. The protein is Chorionic somatomammotropin hormone (CSH) of Ovis aries (Sheep).